Reading from the N-terminus, the 292-residue chain is 33 kDa chaperonin (292 aa).

2 disulfides stabilise this stretch: C230–C232 and C263–C266.

Belongs to the HSP33 family. Post-translationally, under oxidizing conditions two disulfide bonds are formed involving the reactive cysteines. Under reducing conditions zinc is bound to the reactive cysteines and the protein is inactive.

The protein localises to the cytoplasm. Functionally, redox regulated molecular chaperone. Protects both thermally unfolding and oxidatively damaged proteins from irreversible aggregation. Plays an important role in the bacterial defense system toward oxidative stress. The chain is 33 kDa chaperonin from Sodalis glossinidius (strain morsitans).